We begin with the raw amino-acid sequence, 293 residues long: Elongation factor Ts (293 aa).

The interval 80–83 (TDFV) is involved in Mg(2+) ion dislocation from EF-Tu.

This sequence belongs to the EF-Ts family.

The protein localises to the cytoplasm. Functionally, associates with the EF-Tu.GDP complex and induces the exchange of GDP to GTP. It remains bound to the aminoacyl-tRNA.EF-Tu.GTP complex up to the GTP hydrolysis stage on the ribosome. The chain is Elongation factor Ts from Paraburkholderia phytofirmans (strain DSM 17436 / LMG 22146 / PsJN) (Burkholderia phytofirmans).